Consider the following 201-residue polypeptide: Large ribosomal subunit protein uL4 (201 aa).

The interval 46 to 71 is disordered; it reads QKTRAEVVGSGKKPWRQKGTGRARAG.

It belongs to the universal ribosomal protein uL4 family. As to quaternary structure, part of the 50S ribosomal subunit.

Its function is as follows. One of the primary rRNA binding proteins, this protein initially binds near the 5'-end of the 23S rRNA. It is important during the early stages of 50S assembly. It makes multiple contacts with different domains of the 23S rRNA in the assembled 50S subunit and ribosome. In terms of biological role, forms part of the polypeptide exit tunnel. The chain is Large ribosomal subunit protein uL4 from Shewanella piezotolerans (strain WP3 / JCM 13877).